We begin with the raw amino-acid sequence, 399 residues long: Imidazolonepropionase (399 aa).

A compositionally biased stretch (polar residues) spans 1–13 (MSETLYTGISQLA). Residues 1–20 (MSETLYTGISQLATPRPGPQ) form a disordered region. 2 residues coordinate Fe(3+): His74 and His76. The Zn(2+) site is built by His74 and His76. 3 residues coordinate 4-imidazolone-5-propanoate: Arg83, Tyr146, and His176. Tyr146 contacts N-formimidoyl-L-glutamate. His238 serves as a coordination point for Fe(3+). Position 238 (His238) interacts with Zn(2+). Residue Gln241 participates in 4-imidazolone-5-propanoate binding. Asp312 lines the Fe(3+) pocket. Residue Asp312 coordinates Zn(2+). Residues Asn314 and Gly316 each coordinate N-formimidoyl-L-glutamate. Residue Ser317 participates in 4-imidazolone-5-propanoate binding.

This sequence belongs to the metallo-dependent hydrolases superfamily. HutI family. It depends on Zn(2+) as a cofactor. The cofactor is Fe(3+).

Its subcellular location is the cytoplasm. The catalysed reaction is 4-imidazolone-5-propanoate + H2O = N-formimidoyl-L-glutamate. Its pathway is amino-acid degradation; L-histidine degradation into L-glutamate; N-formimidoyl-L-glutamate from L-histidine: step 3/3. Functionally, catalyzes the hydrolytic cleavage of the carbon-nitrogen bond in imidazolone-5-propanoate to yield N-formimidoyl-L-glutamate. It is the third step in the universal histidine degradation pathway. This Deinococcus radiodurans (strain ATCC 13939 / DSM 20539 / JCM 16871 / CCUG 27074 / LMG 4051 / NBRC 15346 / NCIMB 9279 / VKM B-1422 / R1) protein is Imidazolonepropionase.